The primary structure comprises 448 residues: DNA primase DnaG (448 aa).

The region spanning 186 to 260 is the Toprim domain; that stretch reads DSIIVVEGRN…EADFVARAPP (75 aa). Glutamate 192, aspartate 234, and aspartate 236 together coordinate Mg(2+). The segment at 318-340 is disordered; sequence AEVIEEPPEQPPKNEEIREEQSQ. The span at 329–338 shows a compositional bias: basic and acidic residues; that stretch reads PKNEEIREEQ.

This sequence belongs to the archaeal DnaG primase family. Forms a ternary complex with MCM helicase and DNA. Component of the archaeal exosome complex. Mg(2+) serves as cofactor.

It catalyses the reaction ssDNA + n NTP = ssDNA/pppN(pN)n-1 hybrid + (n-1) diphosphate.. In terms of biological role, RNA polymerase that catalyzes the synthesis of short RNA molecules used as primers for DNA polymerase during DNA replication. Also part of the exosome, which is a complex involved in RNA degradation. Acts as a poly(A)-binding protein that enhances the interaction between heteromeric, adenine-rich transcripts and the exosome. The sequence is that of DNA primase DnaG from Thermoplasma acidophilum (strain ATCC 25905 / DSM 1728 / JCM 9062 / NBRC 15155 / AMRC-C165).